A 4241-amino-acid polypeptide reads, in one-letter code: Intermembrane lipid transfer protein vps13E (4241 aa).

In terms of domain architecture, Chorein N-terminal spans 5–97 (ILPGLLKKIL…GPKDIINTFS (93 aa)). The span at 120-140 (IDSNSNNNNKKNAPSSSSSND) shows a compositional bias: low complexity. 8 disordered regions span residues 120-143 (IDSN…DDFF), 234-340 (LSKN…QQQQ), 942-986 (LGTG…VEKE), 1220-1256 (NNNN…NQKP), 1345-1369 (TTTT…QNRH), 1534-1571 (KPSS…YNNN), 2148-2192 (QQQQ…PNVH), and 2217-2282 (VTEK…NNIN). The span at 234 to 254 (LSKNTSTHQQQQPTFNPYVGS) shows a compositional bias: polar residues. Residues 255–264 (QQQQQQQPQQ) show a composition bias toward low complexity. Over residues 279–289 (FMNNKNSDEGI) the composition is skewed to polar residues. Low complexity-rich tracts occupy residues 290 to 313 (SSSS…LNDN), 325 to 340 (QPTP…QQQQ), and 942 to 952 (LGTGNGINNNN). Residues 968 to 986 (DDGKYPEQDDLDDSKVEKE) show a composition bias toward basic and acidic residues. Residues 1220–1253 (NNNNNNNNNNNNNNNNNNNNNRNLNNNNNNNNNN) are compositionally biased toward low complexity. Positions 1352–1369 (RYHHQNHHNHQHKKQNRH) are enriched in basic residues. Low complexity-rich tracts occupy residues 1538–1551 (KDNN…NNSD), 1559–1571 (DSSS…YNNN), and 2148–2177 (QQQQ…NNNN). Positions 2178–2188 (VSGNTINNKSV) are enriched in polar residues. A compositionally biased stretch (acidic residues) spans 2246 to 2259 (SDDDDDEGEDEDIG). Residues 2265–2282 (DHSTSSAPTSRSNYNNIN) show a composition bias toward polar residues. One can recognise an SHR-BD domain in the interval 2825-3134 (KIVFYNQYWI…IPYVWDLPLE (310 aa)). Disordered regions lie at residues 3973 to 4000 (PTTT…YPTE), 4059 to 4094 (YQHS…RQLQ), and 4109 to 4140 (KSMA…SGSG). The span at 3974–3984 (TTTTTTNTTTT) shows a compositional bias: low complexity. The span at 3985–4000 (PYQSSQNIHSTPYPTE) shows a compositional bias: polar residues. A compositionally biased stretch (polar residues) spans 4128–4140 (SNNRLSLTPSGSG).

The protein belongs to the VPS13 family.

Its subcellular location is the membrane. In terms of biological role, mediates the transfer of lipids between membranes at organelle contact sites. This Dictyostelium discoideum (Social amoeba) protein is Intermembrane lipid transfer protein vps13E (vps13E).